Reading from the N-terminus, the 506-residue chain is ATP synthase subunit alpha, mitochondrial (506 aa).

171-178 (GDRQTGKT) contacts ATP.

The protein belongs to the ATPase alpha/beta chains family. As to quaternary structure, F-type ATPases have 2 components, CF(1) - the catalytic core - and CF(0) - the membrane proton channel. CF(1) has five subunits: alpha(3), beta(3), gamma(1), delta(1), epsilon(1). CF(0) has three main subunits: a, b and c.

It is found in the mitochondrion. It localises to the mitochondrion inner membrane. Its function is as follows. Mitochondrial membrane ATP synthase (F(1)F(0) ATP synthase or Complex V) produces ATP from ADP in the presence of a proton gradient across the membrane which is generated by electron transport complexes of the respiratory chain. F-type ATPases consist of two structural domains, F(1) - containing the extramembraneous catalytic core, and F(0) - containing the membrane proton channel, linked together by a central stalk and a peripheral stalk. During catalysis, ATP synthesis in the catalytic domain of F(1) is coupled via a rotary mechanism of the central stalk subunits to proton translocation. Subunits alpha and beta form the catalytic core in F(1). Rotation of the central stalk against the surrounding alpha(3)beta(3) subunits leads to hydrolysis of ATP in three separate catalytic sites on the beta subunits. Subunit alpha does not bear the catalytic high-affinity ATP-binding sites. This Beta vulgaris (Sugar beet) protein is ATP synthase subunit alpha, mitochondrial (ATPA).